The sequence spans 571 residues: Zinc finger protein 181 (571 aa).

Residues 4–76 enclose the KRAB domain; it reads VTFNDVAIDF…EKKLSKGMIP (73 aa). Glycyl lysine isopeptide (Lys-Gly) (interchain with G-Cter in SUMO2) cross-links involve residues K109 and K126. C2H2-type zinc fingers lie at residues 237–259, 265–287, 293–315, 321–343, 349–371, 377–399, 405–427, 433–455, 461–483, 489–511, and 517–539; these read YTCS…WRIH, YECR…LISH, YKCI…QSTH, YECM…LRIH, YECR…QKIH, YECR…QRIH, YECN…QSIH, FECQ…LRNH, YECS…HRIH, YECI…QRIH, and YKCN…QRVH.

It belongs to the krueppel C2H2-type zinc-finger protein family.

The protein resides in the nucleus. Its function is as follows. May be involved in transcriptional regulation. This is Zinc finger protein 181 (ZNF181) from Homo sapiens (Human).